The sequence spans 180 residues: Cell division protein SepF (180 aa).

The segment at 14–81 (NSEDDEEFDN…SKITPISKSS (68 aa)) is disordered. Acidic residues predominate over residues 15-35 (SEDDEEFDNEDYYLDDEEEEE). Over residues 57–68 (TRRDTTPKEKPV) the composition is skewed to basic and acidic residues. Over residues 69 to 79 (KTTSKITPISK) the composition is skewed to low complexity.

It belongs to the SepF family. In terms of assembly, homodimer. Interacts with FtsZ.

The protein resides in the cytoplasm. Cell division protein that is part of the divisome complex and is recruited early to the Z-ring. Probably stimulates Z-ring formation, perhaps through the cross-linking of FtsZ protofilaments. Its function overlaps with FtsA. The polypeptide is Cell division protein SepF (Agathobacter rectalis (strain ATCC 33656 / DSM 3377 / JCM 17463 / KCTC 5835 / VPI 0990) (Eubacterium rectale)).